Consider the following 318-residue polypeptide: Retinol dehydrogenase 11 (318 aa).

Residues 1–21 (MVELMFPLLLLLLPFLLYMAA) form a helical; Signal-anchor for type II membrane protein membrane-spanning segment. Residues 22–318 (PQIRKMLSSG…SCDLLGLPID (297 aa)) are Cytoplasmic-facing. NADP(+) is bound at residue 48–54 (GANTGIG). K112 carries the post-translational modification N6-acetyllysine. A substrate-binding site is contributed by S177. Residue Y202 is the Proton acceptor of the active site.

This sequence belongs to the short-chain dehydrogenases/reductases (SDR) family. In terms of assembly, interacts with SELENOF. Not glycosylated. Predominantly expressed in the epithelial cells of prostate, in both basal and luminal secretory cell populations. Expressed at low levels in spleen, thymus, testis, ovary, small intestine, colon, peripherical blood leukocytes, kidney, adrenal gland and fetal liver. Not detected in prostatic fibromuscular stromal cells, endothelial cells, or infiltrating lymphocytes.

It localises to the endoplasmic reticulum membrane. The catalysed reaction is all-trans-retinol + NADP(+) = all-trans-retinal + NADPH + H(+). The enzyme catalyses 11-cis-retinol + NADP(+) = 11-cis-retinal + NADPH + H(+). It catalyses the reaction 9-cis-retinol + NADP(+) = 9-cis-retinal + NADPH + H(+). It carries out the reaction 13-cis-retinol + NADP(+) = 13-cis-retinal + NADPH + H(+). The protein operates within cofactor metabolism; retinol metabolism. Its activity is regulated as follows. SELENOF decreases the retinol dehydrogenase activity. Its function is as follows. Retinol dehydrogenase with a clear preference for NADP. Displays high activity towards 9-cis, 11-cis and all-trans-retinol, and to a lesser extent on 13-cis-retinol. Exhibits a low reductive activity towards unsaturated medium-chain aldehydes such as cis -6-nonenal and no activity toward nonanal or 4-hydroxy-nonenal. Has no dehydrogenase activity towards steroid. This Homo sapiens (Human) protein is Retinol dehydrogenase 11 (RDH11).